Reading from the N-terminus, the 2422-residue chain is Interferon-induced very large GTPase 1 (2422 aa).

Residues 945-965 (ENFFEDSDSPTKSSSTEPSPH) are disordered. The span at 954-963 (PTKSSSTEPS) shows a compositional bias: low complexity. A VLIG-type G domain is found at 1479-1720 (DKRLFVLSIL…KISDVKSRVQ (242 aa)). Residues 1489 to 1496 (GLQSSGKS), 1542 to 1545 (DTEG), and 1619 to 1622 (TATD) each bind GTP.

This sequence belongs to the TRAFAC class dynamin-like GTPase superfamily. Very large inducible GTPase (VLIG) family.

The protein resides in the cytoplasm. It localises to the cytosol. The protein localises to the nucleus. This chain is Interferon-induced very large GTPase 1 (GVINP1), found in Homo sapiens (Human).